A 928-amino-acid polypeptide reads, in one-letter code: MORC family CW-type zinc finger protein 4 (928 aa).

The CW-type zinc finger occupies 417–469; the sequence is RIPDQTWVQCDECLKWRRLPGMVDPSTLPARWFCYYNPHPKFKRCSVPEEQER. Residues cysteine 426, cysteine 429, cysteine 450, and cysteine 461 each coordinate Zn(2+). Disordered regions lie at residues 474–510, 527–546, 599–649, and 718–766; these read LHRS…TPPL, NSPS…PRLK, AYPE…DQDQ, and RAES…LKRT. Residues 485–497 are compositionally biased toward basic and acidic residues; that stretch reads AAEKKQKPMESDK. Basic and acidic residues-rich tracts occupy residues 626–636, 739–748, and 756–766; these read ESNKHTEENRE, KGKDCQDSRS, and TPKESEELKRT. A coiled-coil region spans residues 758–867; it reads KESEELKRTT…LEVLQKAQVS (110 aa).

It localises to the nucleus. In terms of biological role, histone methylation reader which binds to non-methylated (H3K4me0), monomethylated (H3K4me1), dimethylated (H3K4me2) and trimethylated (H3K4me3) 'Lys-4' on histone H3. The order of binding preference is H3K4me3 &gt; H3K4me2 &gt; H3K4me1 &gt; H3K4me0. This Mus musculus (Mouse) protein is MORC family CW-type zinc finger protein 4 (Morc4).